A 462-amino-acid chain; its full sequence is Spermatogenesis- and oogenesis-specific basic helix-loop-helix-containing protein 2 (462 aa).

In terms of domain architecture, bHLH spans 200–251 (KASFLHSSKEKLRRERIKFCCEQLRTLLPYVKGRKSDVASVIEATVDYVKQV). The interval 422 to 462 (PASSRTASSSIFRGFRESDSGHQASQQPTGPSLQPQDSSYF) is disordered. Over residues 442 to 462 (GHQASQQPTGPSLQPQDSSYF) the composition is skewed to polar residues.

It is found in the nucleus. Functionally, probable transcription factor, which may be involved in spermatogenesis and oogenesis. This Rattus norvegicus (Rat) protein is Spermatogenesis- and oogenesis-specific basic helix-loop-helix-containing protein 2 (Sohlh2).